A 298-amino-acid polypeptide reads, in one-letter code: Lipoyl synthase (298 aa).

Cysteine 40, cysteine 45, cysteine 51, cysteine 67, cysteine 71, cysteine 74, and serine 280 together coordinate [4Fe-4S] cluster. A Radical SAM core domain is found at 53 to 269 (AVRKTATFMI…KEIALSKGFS (217 aa)).

It belongs to the radical SAM superfamily. Lipoyl synthase family. Requires [4Fe-4S] cluster as cofactor.

It is found in the cytoplasm. The enzyme catalyses [[Fe-S] cluster scaffold protein carrying a second [4Fe-4S](2+) cluster] + N(6)-octanoyl-L-lysyl-[protein] + 2 oxidized [2Fe-2S]-[ferredoxin] + 2 S-adenosyl-L-methionine + 4 H(+) = [[Fe-S] cluster scaffold protein] + N(6)-[(R)-dihydrolipoyl]-L-lysyl-[protein] + 4 Fe(3+) + 2 hydrogen sulfide + 2 5'-deoxyadenosine + 2 L-methionine + 2 reduced [2Fe-2S]-[ferredoxin]. It functions in the pathway protein modification; protein lipoylation via endogenous pathway; protein N(6)-(lipoyl)lysine from octanoyl-[acyl-carrier-protein]. Its function is as follows. Catalyzes the radical-mediated insertion of two sulfur atoms into the C-6 and C-8 positions of the octanoyl moiety bound to the lipoyl domains of lipoate-dependent enzymes, thereby converting the octanoylated domains into lipoylated derivatives. The chain is Lipoyl synthase from Bacillus cereus (strain ATCC 10987 / NRS 248).